A 153-amino-acid polypeptide reads, in one-letter code: Aspartate carbamoyltransferase regulatory chain (153 aa).

Residues C109, C114, C138, and C141 each coordinate Zn(2+).

The protein belongs to the PyrI family. As to quaternary structure, contains catalytic and regulatory chains. Requires Zn(2+) as cofactor.

Involved in allosteric regulation of aspartate carbamoyltransferase. This is Aspartate carbamoyltransferase regulatory chain from Vibrio vulnificus (strain CMCP6).